The sequence spans 494 residues: 3-octaprenyl-4-hydroxybenzoate carboxy-lyase (494 aa).

Asn-172 contributes to the Mn(2+) binding site. Prenylated FMN is bound by residues Ile-175–Arg-177, Arg-189–Leu-191, and Arg-194–Gly-195. Residue Glu-238 coordinates Mn(2+). Asp-287 (proton donor) is an active-site residue.

It belongs to the UbiD family. As to quaternary structure, homohexamer. Prenylated FMN serves as cofactor. The cofactor is Mn(2+).

Its subcellular location is the cell membrane. The enzyme catalyses a 4-hydroxy-3-(all-trans-polyprenyl)benzoate + H(+) = a 2-(all-trans-polyprenyl)phenol + CO2. The protein operates within cofactor biosynthesis; ubiquinone biosynthesis. In terms of biological role, catalyzes the decarboxylation of 3-octaprenyl-4-hydroxy benzoate to 2-octaprenylphenol, an intermediate step in ubiquinone biosynthesis. The polypeptide is 3-octaprenyl-4-hydroxybenzoate carboxy-lyase (Shigella flexneri serotype 5b (strain 8401)).